Here is a 338-residue protein sequence, read N- to C-terminus: NADPH dehydrogenase (338 aa).

Tyr28 contributes to the substrate binding site. 2 residues coordinate FMN: Ala60 and Gln102. 164 to 167 contributes to the substrate binding site; it reads HAAH. FMN contacts are provided by residues Arg215 and 307–308; that span reads AR.

It belongs to the NADH:flavin oxidoreductase/NADH oxidase family. NamA subfamily. As to quaternary structure, homotetramer. FMN is required as a cofactor.

It catalyses the reaction A + NADPH + H(+) = AH2 + NADP(+). Functionally, catalyzes the reduction of the double bond of an array of alpha,beta-unsaturated aldehydes and ketones. It also reduces the nitro group of nitroester and nitroaromatic compounds. It could have a role in detoxification processes. In Bacillus velezensis (strain DSM 23117 / BGSC 10A6 / LMG 26770 / FZB42) (Bacillus amyloliquefaciens subsp. plantarum), this protein is NADPH dehydrogenase.